A 308-amino-acid polypeptide reads, in one-letter code: Sulfate adenylyltransferase subunit 2 (308 aa).

Belongs to the PAPS reductase family. CysD subfamily. As to quaternary structure, heterodimer composed of CysD, the smaller subunit, and CysN.

The catalysed reaction is sulfate + ATP + H(+) = adenosine 5'-phosphosulfate + diphosphate. The protein operates within sulfur metabolism; hydrogen sulfide biosynthesis; sulfite from sulfate: step 1/3. Its function is as follows. With CysN forms the ATP sulfurylase (ATPS) that catalyzes the adenylation of sulfate producing adenosine 5'-phosphosulfate (APS) and diphosphate, the first enzymatic step in sulfur assimilation pathway. APS synthesis involves the formation of a high-energy phosphoric-sulfuric acid anhydride bond driven by GTP hydrolysis by CysN coupled to ATP hydrolysis by CysD. This chain is Sulfate adenylyltransferase subunit 2, found in Chromobacterium violaceum (strain ATCC 12472 / DSM 30191 / JCM 1249 / CCUG 213 / NBRC 12614 / NCIMB 9131 / NCTC 9757 / MK).